The following is a 242-amino-acid chain: Galectin-3 (242 aa).

The disordered stretch occupies residues 1–35 (MADGFSLNDALSGSGHPPNQGWPGPWGNQPAGPGG). An N-acetylalanine modification is found at Ala-2. Phosphoserine; by CK1 is present on Ser-6. At Ser-12 the chain carries Phosphoserine. A compositionally biased stretch (low complexity) spans 17 to 31 (PPNQGWPGPWGNQPA). Tandem repeats lie at residues 35-43 (GYPGAAYPG), 44-52 (AYPGHAPGA), 53-61 (YPGQAPPGP), and 62-70 (YPGPGAHGA). Residues 35–98 (GYPGAAYPGA…GAGAYPGASP (64 aa)) form a 7 X 9 AA tandem repeats of Y-P-G-X(3)-P-[GS]-A region. Residues 55-93 (GQAPPGPYPGPGAHGAYPGQPGGPGAYPSPGQPSGAGAY) form a disordered region. The stretch at 71–80 (YPGQPGGPGA) is one 5; approximate repeat. Positions 80-93 (AYPSPGQPSGAGAY) are enriched in low complexity. Residues 81 to 92 (YPSPGQPSGAGA) form a 6; approximate repeat. The stretch at 93 to 98 (YPGASP) is one 7; truncated repeat. One can recognise a Galectin domain in the interval 110–240 (YDLPLPGGVM…DIQLTSASHA (131 aa)). 173 to 181 (WGREERQTT) lines the a beta-D-galactoside pocket. The Nuclear export signal motif lies at 218–233 (RNLKEINKLGISGDIQ).

As to quaternary structure, probably forms homo- or heterodimers. Interacts with DMBT1. Interacts with CD6 and ALCAM. Forms a complex with the ITGA3, ITGB1 and CSPG4. Interacts with LGALS3BP, LYPD3, ZFTRAF1 and UACA. Interacts with TRIM16; this interaction mediates autophagy of damage endomembranes. Interacts with cargo receptor TMED10; the interaction mediates the translocation from the cytoplasm into the ERGIC (endoplasmic reticulum-Golgi intermediate compartment) and thereby secretion. Interacts with and inhibits by binding NCR3/NKp30.

It localises to the cytoplasm. Its subcellular location is the nucleus. The protein resides in the secreted. Galactose-specific lectin which binds IgE. May mediate with the alpha-3, beta-1 integrin the stimulation by CSPG4 of endothelial cells migration. Together with DMBT1, required for terminal differentiation of columnar epithelial cells during early embryogenesis. In the nucleus: acts as a pre-mRNA splicing factor. Involved in acute inflammatory responses including neutrophil activation and adhesion, chemoattraction of monocytes macrophages, opsonization of apoptotic neutrophils, and activation of mast cells. Together with TRIM16, coordinates the recognition of membrane damage with mobilization of the core autophagy regulators ATG16L1 and BECN1 in response to damaged endomembranes. When secreted, interacts with NK cell-activating receptor NCR3/NKp30 acting as an inhibitory ligand which antagonizes NK cell attack. This Oryctolagus cuniculus (Rabbit) protein is Galectin-3 (LGALS3).